A 404-amino-acid chain; its full sequence is ORC1-type DNA replication protein 2 (404 aa).

ATP-binding positions include 64 to 68 (TGKTS), Y205, and R217.

The protein belongs to the CDC6/cdc18 family. In terms of assembly, interacts with MCM.

Its function is as follows. Involved in regulation of DNA replication. Stimulates the helicase activity of MCM via stimulation of its ATPase activity. Binding to MCM may result in conformational changes in MCM, leading to catalytic ATP hydrolysis by the helicase. Directly stimulates MCM movement along single-stranded and double-stranded DNA. Does not bind DNA. In Thermoplasma acidophilum (strain ATCC 25905 / DSM 1728 / JCM 9062 / NBRC 15155 / AMRC-C165), this protein is ORC1-type DNA replication protein 2 (cdc6-2).